Reading from the N-terminus, the 98-residue chain is Alpha-elicitin hibernalin (98 aa).

Intrachain disulfides connect Cys-3-Cys-71, Cys-27-Cys-56, and Cys-51-Cys-95.

The protein resides in the secreted. In terms of biological role, induces local and distal defense responses (incompatible hypersensitive reaction) in plants from the solanaceae and cruciferae families. Elicits leaf necrosis and causes the accumulation of pathogenesis-related proteins. Might interact with the lipidic molecules of the plasma membrane. The chain is Alpha-elicitin hibernalin from Phytophthora hibernalis.